Consider the following 648-residue polypeptide: Zinc finger CW-type PWWP domain protein 1 (648 aa).

2 disordered regions span residues 1–103 and 137–237; these read MMTT…TNAE and VVST…QDHS. Basic and acidic residues-rich tracts occupy residues 61–79 and 88–97; these read KKKEEKATMKNVPSREQEK and QAEKKEKEKS. Positions 74 to 109 form a coiled coil; it reads SREQEKKRKAQINKQAEKKEKEKSSLTNAEFEEIVQ. Residues 194–208 are compositionally biased toward basic residues; that stretch reads SKKKSNRLTLSKRKK. Residues 209-237 show a composition bias toward basic and acidic residues; that stretch reads EAHEKVEKTQGGHEHRQEDRLKKTVQDHS. The CW-type zinc finger occupies 250-304; the sequence is FGQCLVWVQCSFPNCGKWRRLCGNIDPSVLPDNWSCDQNTDVQYNRCDIPEETWT. C259, C264, C285, and C296 together coordinate Zn(2+). In terms of domain architecture, PWWP spans 317 to 383; that stretch reads PGSIIWAKQY…VNMLKNFQEL (67 aa). Positions 436–648 are disordered; sequence GERKDLQLSG…EDFPVALFGK (213 aa). Residues 453 to 471 are compositionally biased toward basic and acidic residues; that stretch reads LEKKEKEEELEKEEGEKTD. Over residues 505–516 the composition is skewed to basic residues; sequence TLQRKIMKRSLG. Positions 585–595 are enriched in basic and acidic residues; it reads AKEEPRHREPL. The segment covering 604-618 has biased composition (acidic residues); the sequence is LEDEASSDLDLEQLM. A Phosphoserine modification is found at S636.

In terms of tissue distribution, testis.

The protein resides in the nucleus. It is found in the chromosome. Functionally, dual histone methylation reader specific for PRDM9-catalyzed histone marks (H3K4me3 and H3K36me3). Facilitates the repair of PRDM9-induced meiotic double-strand breaks (DSBs). Essential for male fertility and spermatogenesis. Required for meiosis prophase I progression in male but not in female germ cells. The polypeptide is Zinc finger CW-type PWWP domain protein 1 (ZCWPW1) (Homo sapiens (Human)).